A 184-amino-acid chain; its full sequence is Translocon-associated protein subunit beta (184 aa).

The first 20 residues, Met-1–Cys-20, serve as a signal peptide directing secretion. The Lumenal portion of the chain corresponds to Glu-21–Ser-147. The N-linked (GlcNAc...) asparagine glycan is linked to Asn-94. Residues Leu-148–Tyr-168 traverse the membrane as a helical segment. Residues Ser-169–Lys-184 lie on the Cytoplasmic side of the membrane.

This sequence belongs to the TRAP-beta family. Heterotrimer of TRAP-alpha, TRAP-beta and TRAP-gamma.

The protein resides in the endoplasmic reticulum membrane. Its function is as follows. TRAP proteins are part of a complex whose function is to bind calcium to the ER membrane and thereby regulate the retention of ER resident proteins. This is Translocon-associated protein subunit beta (ssr2) from Dictyostelium discoideum (Social amoeba).